The sequence spans 321 residues: tRNA(Ile)-lysidine synthase (321 aa).

30–35 (SGGSDS) is an ATP binding site.

It belongs to the tRNA(Ile)-lysidine synthase family.

The protein localises to the cytoplasm. It carries out the reaction cytidine(34) in tRNA(Ile2) + L-lysine + ATP = lysidine(34) in tRNA(Ile2) + AMP + diphosphate + H(+). Its function is as follows. Ligates lysine onto the cytidine present at position 34 of the AUA codon-specific tRNA(Ile) that contains the anticodon CAU, in an ATP-dependent manner. Cytidine is converted to lysidine, thus changing the amino acid specificity of the tRNA from methionine to isoleucine. This chain is tRNA(Ile)-lysidine synthase, found in Chlamydia muridarum (strain MoPn / Nigg).